Consider the following 382-residue polypeptide: 1-deoxy-D-xylulose 5-phosphate reductoisomerase (382 aa).

NADPH contacts are provided by Thr10, Gly11, Ser12, Ile13, Asn38, and Asn120. Lys121 is a 1-deoxy-D-xylulose 5-phosphate binding site. Glu122 serves as a coordination point for NADPH. Asp146 contributes to the Mn(2+) binding site. 4 residues coordinate 1-deoxy-D-xylulose 5-phosphate: Ser147, Glu148, Ser172, and His195. Residue Glu148 participates in Mn(2+) binding. NADPH is bound at residue Gly201. Residues Ser208, Asn213, Lys214, and Glu217 each contribute to the 1-deoxy-D-xylulose 5-phosphate site. Glu217 lines the Mn(2+) pocket.

This sequence belongs to the DXR family. Mg(2+) is required as a cofactor. Mn(2+) serves as cofactor.

The enzyme catalyses 2-C-methyl-D-erythritol 4-phosphate + NADP(+) = 1-deoxy-D-xylulose 5-phosphate + NADPH + H(+). The protein operates within isoprenoid biosynthesis; isopentenyl diphosphate biosynthesis via DXP pathway; isopentenyl diphosphate from 1-deoxy-D-xylulose 5-phosphate: step 1/6. Its function is as follows. Catalyzes the NADPH-dependent rearrangement and reduction of 1-deoxy-D-xylulose-5-phosphate (DXP) to 2-C-methyl-D-erythritol 4-phosphate (MEP). In Thermoanaerobacter pseudethanolicus (strain ATCC 33223 / 39E) (Clostridium thermohydrosulfuricum), this protein is 1-deoxy-D-xylulose 5-phosphate reductoisomerase.